The following is a 198-amino-acid chain: MTGKEDNDACVLHDKSLKLVLKSRSIVIAGEITKDVSRLFQEKILLLEALDFKKPIFVYIDSEGGDIDAGFAIFNMIRFVKPKVFTVGVGLVASAAALIFLAAKLENRFSLPFARYLLHQPLSGFKGVATDIEIYTNELNKVKKELNNIISKETGQKISKIEKDTDRDFWLDSSAAKKYGLVFEVVETKYQLEEFISA.

S94 acts as the Nucleophile in catalysis. Residue H119 is part of the active site.

This sequence belongs to the peptidase S14 family. As to quaternary structure, fourteen ClpP subunits assemble into 2 heptameric rings which stack back to back to give a disk-like structure with a central cavity, resembling the structure of eukaryotic proteasomes.

It is found in the cytoplasm. It catalyses the reaction Hydrolysis of proteins to small peptides in the presence of ATP and magnesium. alpha-casein is the usual test substrate. In the absence of ATP, only oligopeptides shorter than five residues are hydrolyzed (such as succinyl-Leu-Tyr-|-NHMec, and Leu-Tyr-Leu-|-Tyr-Trp, in which cleavage of the -Tyr-|-Leu- and -Tyr-|-Trp bonds also occurs).. Cleaves peptides in various proteins in a process that requires ATP hydrolysis. Has a chymotrypsin-like activity. Plays a major role in the degradation of misfolded proteins. This chain is ATP-dependent Clp protease proteolytic subunit 2, found in Borreliella burgdorferi (strain ATCC 35210 / DSM 4680 / CIP 102532 / B31) (Borrelia burgdorferi).